A 452-amino-acid polypeptide reads, in one-letter code: Phosphoglucosamine mutase 2 (452 aa).

Ser-101 (phosphoserine intermediate) is an active-site residue. 4 residues coordinate Mg(2+): Ser-101, Asp-245, Asp-247, and Asp-249. Phosphoserine is present on Ser-101.

It belongs to the phosphohexose mutase family. The cofactor is Mg(2+). In terms of processing, activated by phosphorylation.

It carries out the reaction alpha-D-glucosamine 1-phosphate = D-glucosamine 6-phosphate. Its function is as follows. Catalyzes the conversion of glucosamine-6-phosphate to glucosamine-1-phosphate. The polypeptide is Phosphoglucosamine mutase 2 (Shewanella amazonensis (strain ATCC BAA-1098 / SB2B)).